The primary structure comprises 210 residues: Ribosomal RNA large subunit methyltransferase E (210 aa).

5 residues coordinate S-adenosyl-L-methionine: Gly-61, Trp-63, Asp-81, Asp-97, and Asp-122. Lys-162 acts as the Proton acceptor in catalysis.

It belongs to the class I-like SAM-binding methyltransferase superfamily. RNA methyltransferase RlmE family.

Its subcellular location is the cytoplasm. It carries out the reaction uridine(2552) in 23S rRNA + S-adenosyl-L-methionine = 2'-O-methyluridine(2552) in 23S rRNA + S-adenosyl-L-homocysteine + H(+). Functionally, specifically methylates the uridine in position 2552 of 23S rRNA at the 2'-O position of the ribose in the fully assembled 50S ribosomal subunit. This is Ribosomal RNA large subunit methyltransferase E from Xanthomonas oryzae pv. oryzae (strain MAFF 311018).